A 347-amino-acid polypeptide reads, in one-letter code: Probable dual-specificity RNA methyltransferase RlmN (347 aa).

Glutamate 93 functions as the Proton acceptor in the catalytic mechanism. Positions 99–333 (TEKRLTACLS…VSLRKSRGLD (235 aa)) constitute a Radical SAM core domain. A disulfide bridge connects residues cysteine 106 and cysteine 338. 3 residues coordinate [4Fe-4S] cluster: cysteine 113, cysteine 117, and cysteine 120. S-adenosyl-L-methionine-binding positions include 160–161 (GE), serine 190, 219–221 (SLH), and asparagine 295. Residue cysteine 338 is the S-methylcysteine intermediate of the active site.

It belongs to the radical SAM superfamily. RlmN family. Requires [4Fe-4S] cluster as cofactor.

The protein localises to the cytoplasm. The enzyme catalyses adenosine(2503) in 23S rRNA + 2 reduced [2Fe-2S]-[ferredoxin] + 2 S-adenosyl-L-methionine = 2-methyladenosine(2503) in 23S rRNA + 5'-deoxyadenosine + L-methionine + 2 oxidized [2Fe-2S]-[ferredoxin] + S-adenosyl-L-homocysteine. It carries out the reaction adenosine(37) in tRNA + 2 reduced [2Fe-2S]-[ferredoxin] + 2 S-adenosyl-L-methionine = 2-methyladenosine(37) in tRNA + 5'-deoxyadenosine + L-methionine + 2 oxidized [2Fe-2S]-[ferredoxin] + S-adenosyl-L-homocysteine. Specifically methylates position 2 of adenine 2503 in 23S rRNA and position 2 of adenine 37 in tRNAs. The sequence is that of Probable dual-specificity RNA methyltransferase RlmN from Prochlorococcus marinus (strain MIT 9301).